We begin with the raw amino-acid sequence, 150 residues long: Mediator of RNA polymerase II transcription subunit 22a (150 aa).

Positions 99-127 form a coiled coil; it reads SLNDHVEQRIAEFDQEAEKTNRLLARIAD.

The protein belongs to the Mediator complex subunit 22 family. In terms of assembly, component of the Mediator complex.

It is found in the nucleus. In terms of biological role, component of the Mediator complex, a coactivator involved in the regulated transcription of nearly all RNA polymerase II-dependent genes. Mediator functions as a bridge to convey information from gene-specific regulatory proteins to the basal RNA polymerase II transcription machinery. The Mediator complex, having a compact conformation in its free form, is recruited to promoters by direct interactions with regulatory proteins and serves for the assembly of a functional preinitiation complex with RNA polymerase II and the general transcription factors. This chain is Mediator of RNA polymerase II transcription subunit 22a (MED22A), found in Arabidopsis thaliana (Mouse-ear cress).